The chain runs to 460 residues: Argininosuccinate lyase (460 aa).

The protein belongs to the lyase 1 family. Argininosuccinate lyase subfamily.

It localises to the cytoplasm. The enzyme catalyses 2-(N(omega)-L-arginino)succinate = fumarate + L-arginine. The protein operates within amino-acid biosynthesis; L-arginine biosynthesis; L-arginine from L-ornithine and carbamoyl phosphate: step 3/3. The chain is Argininosuccinate lyase from Lawsonia intracellularis (strain PHE/MN1-00).